Consider the following 584-residue polypeptide: 2-isopropylmalate synthase (584 aa).

The 279-residue stretch at 45-323 (PRWLSTDLRD…SPNLDFSKLD (279 aa)) folds into the Pyruvate carboxyltransferase domain. Residues Asp-54, His-262, His-264, and Asn-298 each coordinate a divalent metal cation.

This sequence belongs to the alpha-IPM synthase/homocitrate synthase family. LeuA type 2 subfamily. Homodimer. Requires a divalent metal cation as cofactor.

The catalysed reaction is 3-methyl-2-oxobutanoate + acetyl-CoA + H2O = (2S)-2-isopropylmalate + CoA + H(+). It participates in amino-acid biosynthesis; L-leucine biosynthesis; L-leucine from 3-methyl-2-oxobutanoate: step 1/4. Functionally, catalyzes the condensation of the acetyl group of acetyl-CoA with 3-methyl-2-oxobutanoate (2-oxoisovalerate) to form 3-carboxy-3-hydroxy-4-methylpentanoate (2-isopropylmalate). This chain is 2-isopropylmalate synthase (leu3), found in Schizosaccharomyces pombe (strain 972 / ATCC 24843) (Fission yeast).